A 152-amino-acid polypeptide reads, in one-letter code: MKTTIRKISARKSIALVAHDSCKQSLIQWTLQHKASLTPHTLYATGTTGHLLARESGLNIQALLSGPMGGDQQLGGLIAEKKIDILIFFWDPMNAAPHDPDVKALMRIATVWNIPVAINETSANFLLSAALFDQEIGINVPDYDGYLAERLA.

The MGS-like domain maps to 6–152; it reads RKISARKSIA…YDGYLAERLA (147 aa). Residues His-19, Lys-23, 45–48, and 65–66 contribute to the substrate site; these read TGTT and SG. Asp-71 serves as the catalytic Proton donor/acceptor. Substrate is bound at residue His-98.

The protein belongs to the methylglyoxal synthase family.

The catalysed reaction is dihydroxyacetone phosphate = methylglyoxal + phosphate. Its function is as follows. Catalyzes the formation of methylglyoxal from dihydroxyacetone phosphate. The sequence is that of Methylglyoxal synthase from Actinobacillus pleuropneumoniae serotype 3 (strain JL03).